A 635-amino-acid chain; its full sequence is Isethionate TRAP transporter permease protein DctMQ (635 aa).

Helical transmembrane passes span 38 to 58 (KPFL…QTLY), 75 to 95 (TEEM…PVAI), 117 to 137 (ISWI…LWQS), 154 to 174 (LQLP…LMAV), 192 to 212 (TVIG…ADYI), 217 to 237 (VLFG…IGLG), 266 to 286 (FPIM…AGGL), 299 to 319 (GALP…FAAI), 350 to 370 (AIVA…PFVV), 379 to 399 (IGKL…ALMA), 431 to 451 (WALM…MTPT), 453 to 473 (AAAL…RELS), 481 to 501 (VVEA…ATIF), 526 to 546 (IAIL…MEAL), 572 to 592 (IIMV…VNLF), and 609 to 629 (VLPL…VPAI).

This sequence in the N-terminal section; belongs to the TRAP transporter small permease family. In the C-terminal section; belongs to the TRAP transporter large permease family. In terms of assembly, the complex comprises the periplasmic solute receptor protein DctP, and the fused transmembrane protein DctMQ.

Its subcellular location is the cell inner membrane. It participates in organosulfur degradation; alkanesulfonate degradation. In terms of biological role, part of the tripartite ATP-independent periplasmic (TRAP) transport system DctPQM involved in the uptake of isethionate (2-hydroxyethanesulfonate), which is then catabolized by enzymes encoded by adjacent genes in the locus. Thereby is involved in an anaerobic respiration pathway that converts the sulfonate isethionate to ammonia, acetate and sulfide. The polypeptide is Isethionate TRAP transporter permease protein DctMQ (Oleidesulfovibrio alaskensis (strain ATCC BAA-1058 / DSM 17464 / G20) (Desulfovibrio alaskensis)).